The following is a 217-amino-acid chain: Peroxiredoxin (217 aa).

Residues 2 to 159 (AVIGEKFPDV…VVRLVKALQT (158 aa)) form the Thioredoxin domain. The active-site Cysteine sulfenic acid (-SOH) intermediate is the Cys-46. Residue Arg-122 participates in substrate binding.

This sequence belongs to the peroxiredoxin family. Prx6 subfamily. As to quaternary structure, homodecamer. Pentamer of dimers that assemble into a ring structure.

Its subcellular location is the cytoplasm. The enzyme catalyses a hydroperoxide + [thioredoxin]-dithiol = an alcohol + [thioredoxin]-disulfide + H2O. In terms of biological role, thiol-specific peroxidase that catalyzes the reduction of hydrogen peroxide and organic hydroperoxides to water and alcohols, respectively. Plays a role in cell protection against oxidative stress by detoxifying peroxides. The chain is Peroxiredoxin from Methanococcus vannielii (strain ATCC 35089 / DSM 1224 / JCM 13029 / OCM 148 / SB).